Here is a 544-residue protein sequence, read N- to C-terminus: NADP-dependent malic enzyme (544 aa).

Positions 1–22 are disordered; sequence MQNKPSFILRNPSANKGTGFNN. Residues 12-21 show a composition bias toward polar residues; it reads PSANKGTGFN. The active-site Proton donor is the Tyr92. An NAD(+)-binding site is contributed by Arg145. Catalysis depends on Lys163, which acts as the Proton acceptor. A divalent metal cation contacts are provided by Glu234, Asp235, and Asp258. NAD(+) is bound at residue Asp258. Residue 287 to 303 coordinates NADP(+); it reads VFLGAGSAGIGVADCIM. Asn400 lines the NAD(+) pocket.

The protein belongs to the malic enzymes family. Homotetramer. The cofactor is Mg(2+). Mn(2+) is required as a cofactor. As to expression, expressed in the fruiting body.

It localises to the cytoplasm. The enzyme catalyses (S)-malate + NADP(+) = pyruvate + CO2 + NADPH. The catalysed reaction is oxaloacetate + H(+) = pyruvate + CO2. This Dictyostelium discoideum (Social amoeba) protein is NADP-dependent malic enzyme (malA).